Here is a 174-residue protein sequence, read N- to C-terminus: Calcineurin subunit B (174 aa).

4 EF-hand domains span residues 21-56 (EEIE…SSNP), 60-88 (RLMD…FSGK), 90-125 (SKLD…MVGK), and 131-166 (ELQQ…KSVA). The Ca(2+) site is built by aspartate 34, aspartate 36, serine 38, threonine 40, glutamate 45, aspartate 66, aspartate 68, asparagine 70, threonine 72, glutamate 77, aspartate 103, aspartate 105, aspartate 107, tyrosine 109, glutamate 114, aspartate 144, aspartate 146, aspartate 148, arginine 150, and glutamate 155.

It belongs to the calcineurin regulatory subunit family. Composed of a catalytic subunit (A) and a regulatory subunit (B).

Its function is as follows. Regulatory subunit of calcineurin, a calcium-dependent, calmodulin stimulated protein phosphatase. Confers calcium sensitivity. This is Calcineurin subunit B (CNB1) from Debaryomyces hansenii (strain ATCC 36239 / CBS 767 / BCRC 21394 / JCM 1990 / NBRC 0083 / IGC 2968) (Yeast).